The sequence spans 496 residues: Probable CtpA-like serine protease (496 aa).

Basic and acidic residues predominate over residues 1–16 (MDDKQHTSSSDDERAE). The interval 1-27 (MDDKQHTSSSDDERAEIATSNQDQETN) is disordered. Polar residues predominate over residues 18-27 (ATSNQDQETN). The helical transmembrane segment at 39–59 (FISILIGTTLITAVITVVAYI) threads the bilayer. The 83-residue stretch at 124 to 206 (TKSFNEGVSG…TEVTLTVQRG (83 aa)) folds into the PDZ domain. Active-site charge relay system residues include Ser-329, Asp-340, and Lys-354.

It belongs to the peptidase S41A family.

It is found in the cell membrane. In Staphylococcus aureus (strain Mu50 / ATCC 700699), this protein is Probable CtpA-like serine protease.